The chain runs to 228 residues: Phosphoribosylformylglycinamidine synthase subunit PurQ (228 aa).

One can recognise a Glutamine amidotransferase type-1 domain in the interval 3–225; it reads FAVLVFPGSN…LTTLKSGVVT (223 aa). The Nucleophile role is filled by Cys86. Residues His194 and Glu196 contribute to the active site.

In terms of assembly, part of the FGAM synthase complex composed of 1 PurL, 1 PurQ and 2 PurS subunits.

Its subcellular location is the cytoplasm. The enzyme catalyses N(2)-formyl-N(1)-(5-phospho-beta-D-ribosyl)glycinamide + L-glutamine + ATP + H2O = 2-formamido-N(1)-(5-O-phospho-beta-D-ribosyl)acetamidine + L-glutamate + ADP + phosphate + H(+). The catalysed reaction is L-glutamine + H2O = L-glutamate + NH4(+). The protein operates within purine metabolism; IMP biosynthesis via de novo pathway; 5-amino-1-(5-phospho-D-ribosyl)imidazole from N(2)-formyl-N(1)-(5-phospho-D-ribosyl)glycinamide: step 1/2. Its function is as follows. Part of the phosphoribosylformylglycinamidine synthase complex involved in the purines biosynthetic pathway. Catalyzes the ATP-dependent conversion of formylglycinamide ribonucleotide (FGAR) and glutamine to yield formylglycinamidine ribonucleotide (FGAM) and glutamate. The FGAM synthase complex is composed of three subunits. PurQ produces an ammonia molecule by converting glutamine to glutamate. PurL transfers the ammonia molecule to FGAR to form FGAM in an ATP-dependent manner. PurS interacts with PurQ and PurL and is thought to assist in the transfer of the ammonia molecule from PurQ to PurL. In Latilactobacillus sakei subsp. sakei (strain 23K) (Lactobacillus sakei subsp. sakei), this protein is Phosphoribosylformylglycinamidine synthase subunit PurQ.